A 76-amino-acid polypeptide reads, in one-letter code: Acyl carrier protein (76 aa).

One can recognise a Carrier domain in the interval Lys2–Asn76. Ser37 carries the O-(pantetheine 4'-phosphoryl)serine modification.

This sequence belongs to the acyl carrier protein (ACP) family. 4'-phosphopantetheine is transferred from CoA to a specific serine of apo-ACP by AcpS. This modification is essential for activity because fatty acids are bound in thioester linkage to the sulfhydryl of the prosthetic group.

It is found in the plastid. Its subcellular location is the chloroplast. It participates in lipid metabolism; fatty acid biosynthesis. Functionally, carrier of the growing fatty acid chain in fatty acid biosynthesis. This Phaeodactylum tricornutum (strain CCAP 1055/1) protein is Acyl carrier protein.